Consider the following 877-residue polypeptide: Phosphoenolpyruvate carboxylase (877 aa).

Active-site residues include His138 and Lys544.

It belongs to the PEPCase type 1 family. Mg(2+) serves as cofactor.

The catalysed reaction is oxaloacetate + phosphate = phosphoenolpyruvate + hydrogencarbonate. Its function is as follows. Forms oxaloacetate, a four-carbon dicarboxylic acid source for the tricarboxylic acid cycle. The sequence is that of Phosphoenolpyruvate carboxylase from Vibrio vulnificus (strain YJ016).